The sequence spans 562 residues: Tissue-type plasminogen activator (562 aa).

Positions 1 to 22 are cleaved as a signal peptide; the sequence is MDAMKRGLCCVLLLCGAVFVSP. Residues 23-32 constitute a propeptide that is removed on maturation; sequence SQEIHARFRR. Positions 33–35 are cleaved as a propeptide — removed by plasmin; it reads GAR. Residues 39–81 enclose the Fibronectin type-I domain; the sequence is VICRDEKTQMIYQQHQSWLRPVLRSNRVEYCWCNSGRAQCHSV. 17 disulfides stabilise this stretch: Cys41–Cys71, Cys69–Cys78, Cys86–Cys97, Cys91–Cys108, Cys110–Cys119, Cys127–Cys208, Cys148–Cys190, Cys179–Cys203, Cys215–Cys296, Cys236–Cys278, Cys267–Cys291, Cys299–Cys430, Cys342–Cys358, Cys350–Cys419, Cys444–Cys519, Cys476–Cys492, and Cys509–Cys537. The important for binding to annexin A2 stretch occupies residues 42 to 52; it reads RDEKTQMIYQQ. The EGF-like domain occupies 82–120; sequence PVKSCSEPRCFNGGTCQQALYFSDFVCQCPEGFAGKCCE. A glycan (O-linked (Fuc) threonine) is linked at Thr96. 2 Kringle domains span residues 127-208 and 215-296; these read CYED…TPAC and CYFG…VPSC. The N-linked (GlcNAc...) asparagine glycan is linked to Asn152. The N-linked (GlcNAc...) asparagine; partial glycan is linked to Asn219. A Peptidase S1 domain is found at 311 to 561; that stretch reads IKGGLFADIA…YLDWIRDNMR (251 aa). Residues His357 and Asp406 each act as charge relay system in the active site. Asn483 carries an N-linked (GlcNAc...) asparagine glycan. The Charge relay system role is filled by Ser513.

It belongs to the peptidase S1 family. As to quaternary structure, heterodimer of chain A and chain B held by a disulfide bond. Forms a heterodimer with SERPINA5. Binds to fibrin with high affinity. This interaction leads to an increase in the catalytic efficiency of the enzyme between 100-fold and 1000-fold, due to an increase in affinity for plasminogen. Similarly, binding to heparin increases the activation of plasminogen. Binds to annexin A2, cytokeratin-8, fibronectin and laminin. Binds to mannose receptor and the low-density lipoprotein receptor-related protein (LRP1); these proteins are involved in TPA clearance. Yet unidentified interactions on endothelial cells and vascular smooth muscle cells (VSMC) lead to a 100-fold stimulation of plasminogen activation. In addition, binding to VSMC reduces TPA inhibition by PAI-1 by 30-fold. Binds LRP1B; binding is followed by internalization and degradation. Interacts with SERPINE1. In complex with SERPINE1, interacts with SORL1. Interacts with apyrase from Anopheles gambiae saliva; the interaction results in PLAT activation probably via an allosteric activation mechanism. In terms of processing, the single chain, almost fully active enzyme, can be further processed into a two-chain fully active form by a cleavage after Arg-310 catalyzed by plasmin, tissue kallikrein or factor Xa. Post-translationally, differential cell-specific N-linked glycosylation gives rise to two glycoforms, type I (glycosylated at Asn-219) and type II (not glycosylated at Asn-219). The single chain type I glycoform is less readily converted into the two-chain form by plasmin, and the two-chain type I glycoform has a lower activity than the two-chain type II glycoform in the presence of fibrin. N-glycosylation of Asn-152; the bound oligomannosidic glycan is involved in the interaction with the mannose receptor. In terms of processing, characterization of O-linked glycan was studied in Bowes melanoma cell line. As to expression, synthesized in numerous tissues (including tumors) and secreted into most extracellular body fluids, such as plasma, uterine fluid, saliva, gingival crevicular fluid, tears, seminal fluid, and milk.

It localises to the secreted. The protein localises to the extracellular space. The enzyme catalyses Specific cleavage of Arg-|-Val bond in plasminogen to form plasmin.. With respect to regulation, inhibited by SERPINA5. Inhibited by SERPINE1. Its function is as follows. Converts the abundant, but inactive, zymogen plasminogen to plasmin by hydrolyzing a single Arg-Val bond in plasminogen. By controlling plasmin-mediated proteolysis, it plays an important role in tissue remodeling and degradation, in cell migration and many other physiopathological events. During oocyte activation, plays a role in cortical granule reaction in the zona reaction, which contributes to the block to polyspermy. This Homo sapiens (Human) protein is Tissue-type plasminogen activator.